An 82-amino-acid chain; its full sequence is ATP synthase subunit c (82 aa).

2 helical membrane passes run 6–26 and 49–69; these read LGLT…GCGI and IMVT…YALV.

This sequence belongs to the ATPase C chain family. As to quaternary structure, F-type ATPases have 2 components, F(1) - the catalytic core - and F(0) - the membrane proton channel. F(1) has five subunits: alpha(3), beta(3), gamma(1), delta(1), epsilon(1). F(0) has three main subunits: a(1), b(2) and c(10-14). The alpha and beta chains form an alternating ring which encloses part of the gamma chain. F(1) is attached to F(0) by a central stalk formed by the gamma and epsilon chains, while a peripheral stalk is formed by the delta and b chains.

The protein resides in the cell inner membrane. F(1)F(0) ATP synthase produces ATP from ADP in the presence of a proton or sodium gradient. F-type ATPases consist of two structural domains, F(1) containing the extramembraneous catalytic core and F(0) containing the membrane proton channel, linked together by a central stalk and a peripheral stalk. During catalysis, ATP synthesis in the catalytic domain of F(1) is coupled via a rotary mechanism of the central stalk subunits to proton translocation. In terms of biological role, key component of the F(0) channel; it plays a direct role in translocation across the membrane. A homomeric c-ring of between 10-14 subunits forms the central stalk rotor element with the F(1) delta and epsilon subunits. The polypeptide is ATP synthase subunit c (Nitratidesulfovibrio vulgaris (strain ATCC 29579 / DSM 644 / CCUG 34227 / NCIMB 8303 / VKM B-1760 / Hildenborough) (Desulfovibrio vulgaris)).